A 67-amino-acid polypeptide reads, in one-letter code: Large ribosomal subunit protein bL31c (67 aa).

The protein belongs to the bacterial ribosomal protein bL31 family. Type A subfamily. In terms of assembly, part of the 50S ribosomal subunit.

It is found in the plastid. The protein resides in the chloroplast. Its function is as follows. Binds the 23S rRNA. This chain is Large ribosomal subunit protein bL31c (rpl31), found in Cyanidioschyzon merolae (strain NIES-3377 / 10D) (Unicellular red alga).